A 247-amino-acid polypeptide reads, in one-letter code: Killer cell lectin-like receptor subfamily I member 2 (247 aa).

Basic and acidic residues predominate over residues 1-12 (MPRKKQNERGTN). A disordered region spans residues 1–39 (MPRKKQNERGTNKQEIINIETKSSTFQEKQRQSKTDQIS). At 1-79 (MPRKKQNERG…GTDPWLTTWR (79 aa)) the chain is on the cytoplasmic side. The helical transmembrane segment at 80 to 100 (IITVILGTSCIILVTKVGFLI) threads the bilayer. Over 101-247 (PNLFSRGEKR…KAYTCEFNLQ (147 aa)) the chain is Extracellular. Asn125, Asn196, Asn212, and Asn218 each carry an N-linked (GlcNAc...) asparagine glycan. One can recognise a C-type lectin domain in the interval 139–243 (FGNNFYLFFR…CSSKKAYTCE (105 aa)). 2 disulfides stabilise this stretch: Cys160-Cys242 and Cys221-Cys234.

In terms of assembly, heterodimer with KLRE1. As to expression, expressed in natural killer (NK) cells.

The protein resides in the cell membrane. Functionally, lectin-like receptor for natural killer (NK) cells. Heterodimer formation with KLRE1 mediates NK cell cytolytic activity. This Rattus norvegicus (Rat) protein is Killer cell lectin-like receptor subfamily I member 2.